A 260-amino-acid chain; its full sequence is Flavin-dependent thymidylate synthase (260 aa).

The region spanning 1–202 (MKIKLVSYSK…PRLFKYAGPN (202 aa)) is the ThyX domain. FAD-binding positions include serine 55, 79–81 (RHR), and glutamine 87. DUMP is bound by residues 76–79 (QLVR), 87–91 (QMSHR), and arginine 141. Positions 79-89 (RHRIASYTQMS) match the ThyX motif motif. Residues 157–159 (NAR) and asparagine 163 each bind FAD. Arginine 168 lines the dUMP pocket. The active-site Involved in ionization of N3 of dUMP, leading to its activation is arginine 168.

This sequence belongs to the thymidylate synthase ThyX family. Homotetramer. It depends on FAD as a cofactor.

The catalysed reaction is dUMP + (6R)-5,10-methylene-5,6,7,8-tetrahydrofolate + NADPH + H(+) = dTMP + (6S)-5,6,7,8-tetrahydrofolate + NADP(+). It functions in the pathway pyrimidine metabolism; dTTP biosynthesis. Functionally, catalyzes the reductive methylation of 2'-deoxyuridine-5'-monophosphate (dUMP) to 2'-deoxythymidine-5'-monophosphate (dTMP) while utilizing 5,10-methylenetetrahydrofolate (mTHF) as the methyl donor, and NADPH and FADH(2) as the reductant. In Sulfolobus acidocaldarius (strain ATCC 33909 / DSM 639 / JCM 8929 / NBRC 15157 / NCIMB 11770), this protein is Flavin-dependent thymidylate synthase.